The chain runs to 343 residues: Heat-inducible transcription repressor HrcA (343 aa).

This sequence belongs to the HrcA family.

Functionally, negative regulator of class I heat shock genes (grpE-dnaK-dnaJ and groELS operons). Prevents heat-shock induction of these operons. This Leptospira biflexa serovar Patoc (strain Patoc 1 / Ames) protein is Heat-inducible transcription repressor HrcA.